Consider the following 487-residue polypeptide: b(0,+)-type amino acid transporter 1 (487 aa).

The span at M1 to E20 shows a compositional bias: basic and acidic residues. A disordered region spans residues M1–T23. Topologically, residues M1–G31 are cytoplasmic. S18 is subject to Phosphoserine. The chain crosses the membrane as a helical span at residues L32–V55. Position 43 to 47 (I43 to G47) interacts with L-arginine. Over L56 to V62 the chain is Extracellular. The helical transmembrane segment at G63–A84 threads the bilayer. The Cytoplasmic portion of the chain corresponds to E85 to Y110. Residues L111–C137 form a helical membrane-spanning segment. Residues A138 to P147 lie on the Extracellular side of the membrane. The next 2 membrane-spanning stretches (helical) occupy residues A148–S169 and V170–I193. At S194–S217 the chain is on the extracellular side. A helical membrane pass occupies residues V218 to L238. D233 lines the L-arginine pocket. Residues N239–N251 are Cytoplasmic-facing. The chain crosses the membrane as a helical span at residues L252–Y274. Topologically, residues F275–S302 are extracellular. A helical membrane pass occupies residues W303 to G325. The Cytoplasmic segment spans residues R326 to P351. A run of 2 helical transmembrane segments spans residues A352 to D370 and I371 to L391. Over G392–P410 the chain is Cytoplasmic. Residues I411 to S431 traverse the membrane as a helical segment. Residues S432–A434 are Extracellular-facing. A helical transmembrane segment spans residues W435 to F450. At Y451–E487 the chain is on the cytoplasmic side.

This sequence belongs to the amino acid-polyamine-organocation (APC) superfamily. In terms of assembly, disulfide-linked heterodimer composed of the catalytic light chain subunit SLC7A9 and the heavy chain subunit SLC3A1. The heterodimer is the minimal functional unit. Assembles in heterotetramers (dimers of heterodimers) and higher order oligomers; the oligomerization is mediated by SLC3A1 likely to prevent degradation and facilitate heteromer trafficking to the plasma membrane. Interacts with CAV1. Outer medulla of kidney (at protein level). Kidney and small intestine. In the kidney localized to the apical membrane of the proximal tubules.

Its subcellular location is the apical cell membrane. It catalyses the reaction L-leucine(out) + L-arginine(in) = L-leucine(in) + L-arginine(out). The enzyme catalyses L-histidine(out) + L-arginine(in) = L-histidine(in) + L-arginine(out). The catalysed reaction is L-arginine(in) + L-phenylalanine(out) = L-arginine(out) + L-phenylalanine(in). It carries out the reaction L-cysteine(out) + L-arginine(in) = L-cysteine(in) + L-arginine(out). It catalyses the reaction L-cystine(out) + L-arginine(in) = L-cystine(in) + L-arginine(out). The enzyme catalyses L-lysine(out) + L-arginine(in) = L-lysine(in) + L-arginine(out). Its function is as follows. Associates with SLC3A1 to form a functional transporter complex that mediates the electrogenic exchange between cationic amino acids and neutral amino acids, with a stoichiometry of 1:1. Has system b(0,+)-like activity with high affinity for extracellular cationic amino acids and L-cystine and lower affinity for intracellular neutral amino acids. Substrate exchange is driven by high concentration of intracellular neutral amino acids and the intracellular reduction of L-cystine to L-cysteine. Required for reabsorption of L-cystine and dibasic amino acids across the brush border membrane in renal proximal tubules. This Rattus norvegicus (Rat) protein is b(0,+)-type amino acid transporter 1 (Slc7a9).